The following is a 459-amino-acid chain: Argininosuccinate lyase (459 aa).

The protein belongs to the lyase 1 family. Argininosuccinate lyase subfamily.

The protein resides in the cytoplasm. The enzyme catalyses 2-(N(omega)-L-arginino)succinate = fumarate + L-arginine. The protein operates within amino-acid biosynthesis; L-arginine biosynthesis; L-arginine from L-ornithine and carbamoyl phosphate: step 3/3. This Geobacillus kaustophilus (strain HTA426) protein is Argininosuccinate lyase.